Here is a 353-residue protein sequence, read N- to C-terminus: MRKRISAIIMTLFMVLASCSNQLEAEKLAAESKNTFFDSLVKIGQGFQDIFGIFGNAIGDALGFNAVKSDDKRSKVGEHFEGVGKGLKDTKIKLDELLKEVTAAPHADTTEVKSVINSASAVLTKLIDSVTKLAGAVGNTDIADGVSIANGAAAEEASVKTVIEGVKEIIDVATNSGVKIEKGNAGTAVANANGPKAIIHNAQAAAGDATKLADEVAKADPWAMIDKIKNAKTKNGIAAANDDAGQLATATNAANNNGTAATNADLAAAVALKAMAKGGKFTQPAANEDGAVKAAAASAVNKVLGILDVIIRKAVNLELGKIKEAVKGIKYSEATGEATESDTAQPITNKSSN.

The N-terminal stretch at 1-18 (MRKRISAIIMTLFMVLAS) is a signal peptide. Cys19 carries N-palmitoyl cysteine lipidation. Residue Cys19 is the site of S-diacylglycerol cysteine attachment.

This sequence belongs to the variable large protein (Vlp) family. Beta subfamily.

It localises to the cell outer membrane. Functionally, the Vlp and Vsp proteins are antigenically distinct proteins, only one vlp or vsp gene is transcriptionally active at any one time. Switching between these genes is a mechanism of host immune response evasion. In Borrelia hermsii, this protein is Variable large protein 12.